The following is a 311-amino-acid chain: Pyrimidine-specific ribonucleoside hydrolase RihA (311 aa).

The active site involves His-240.

The protein belongs to the IUNH family. RihA subfamily.

In terms of biological role, hydrolyzes with equal efficiency cytidine or uridine to ribose and cytosine or uracil, respectively. The sequence is that of Pyrimidine-specific ribonucleoside hydrolase RihA from Escherichia coli (strain K12 / MC4100 / BW2952).